The primary structure comprises 479 residues: Alpha,alpha-trehalose-phosphate synthase [UDP-forming] 2 (479 aa).

Residues Tyr96 and Asp150 each contribute to the D-glucose 6-phosphate site. Positions 287 and 292 each coordinate UDP. Positions 287 and 292 each coordinate UDP-alpha-D-glucose. Residue Arg325 participates in D-glucose 6-phosphate binding. Residues 363–364 (SV) and 390–394 (LVSFE) contribute to the UDP site. 386–394 (DGMNLVSFE) serves as a coordination point for UDP-alpha-D-glucose.

Belongs to the glycosyltransferase 20 family.

It catalyses the reaction D-glucose 6-phosphate + UDP-alpha-D-glucose = alpha,alpha-trehalose 6-phosphate + UDP + H(+). Its pathway is carbohydrate biosynthesis. Its function is as follows. Synthase catalytic subunit of the trehalose synthase complex that catalyzes the production of trehalose from glucose-6-phosphate and UDP-alpha-D-glucose in a two step process. The disaccharide trehalose serves as a storage carbohydrate that is mobilized during conidial germination. Regulates the level of trehalose as a protectant for cell integrity during thermal and oxidative stress. This chain is Alpha,alpha-trehalose-phosphate synthase [UDP-forming] 2, found in Aspergillus fumigatus (strain ATCC MYA-4609 / CBS 101355 / FGSC A1100 / Af293) (Neosartorya fumigata).